Consider the following 1717-residue polypeptide: DNA-directed RNA polymerase I subunit RPA1 (1717 aa).

Residues Cys-64, Cys-67, Cys-74, His-77, Cys-104, and Cys-107 each coordinate Zn(2+). Residues Leu-110–Ala-201 form a clamp region. Zn(2+) is bound by residues Cys-205 and Cys-208. The tract at residues Phe-327–Gly-433 is clamp. A rudder region spans residues Asp-410–Gly-423. Lys-431, Arg-436, and Arg-443 together coordinate DNA. Positions Tyr-475–Val-549 are involved in RRN3 binding to Pol I complex. Arg-559 is an RNA binding site. The Mg(2+) site is built by Asp-595, Asp-597, and Asp-599. Asp-599 provides a ligand contact to RNA. The funnel stretch occupies residues Lys-812 to Leu-890. A bridging helix region spans residues Arg-967–Ile-1008. The segment at Ala-1067 to Tyr-1162 is mediates the interaction with TOP2A. The tract at residues Pro-1214 to Leu-1255 is trigger loop. Arg-1256 is a binding site for DNA. Residues Arg-1372–Glu-1493 form a disordered region. The span at Thr-1380–Glu-1397 shows a compositional bias: basic and acidic residues. A Phosphoserine modification is found at Ser-1393. Composition is skewed to acidic residues over residues Glu-1398–Ala-1419 and Glu-1429–Glu-1450. The span at Gly-1452–Glu-1464 shows a compositional bias: basic and acidic residues. Residues Pro-1465 to Glu-1477 show a composition bias toward acidic residues.

It belongs to the RNA polymerase beta' chain family. Component of the RNA polymerase I (Pol I) complex consisting of 13 subunits: a ten-subunit catalytic core composed of POLR1A/RPA1, POLR1B/RPA2, POLR1C/RPAC1, POLR1D/RPAC2, POLR1H/RPA12, POLR2E/RPABC1, POLR2F/RPABC2, POLR2H/RPABC3, POLR2K/RPABC4 and POLR2L/RPABC5; a mobile stalk subunit POLR1F/RPA43 protruding from the core and additional subunits homologous to general transcription factors POLR1E/RPA49 and POLR1G/RPA34. Part of Pol I pre-initiation complex (PIC), in which Pol I core assembles with RRN3 and promoter-bound UTBF and SL1/TIF-IB complex. Interacts (via dock II domain) with TOP2A; this interaction may assist Pol I transcription initiation by releasing supercoils occurring during DNA unwinding. Interacts with CAVIN1; this interaction induces the dissociation of Pol I complex paused at rDNA terminator sequences. Interacts with MYO1C. Interacts with ERBB2. Interacts with DDX11. Interacts with RECQL5. Requires Mg(2+) as cofactor. Post-translationally, phosphorylated.

Its subcellular location is the nucleus. The protein localises to the nucleolus. It localises to the chromosome. The enzyme catalyses RNA(n) + a ribonucleoside 5'-triphosphate = RNA(n+1) + diphosphate. Catalytic core component of RNA polymerase I (Pol I), a DNA-dependent RNA polymerase which synthesizes ribosomal RNA precursors using the four ribonucleoside triphosphates as substrates. Transcribes 47S pre-rRNAs from multicopy rRNA gene clusters, giving rise to 5.8S, 18S and 28S ribosomal RNAs. Pol I-mediated transcription cycle proceeds through transcription initiation, transcription elongation and transcription termination stages. During transcription initiation, Pol I pre-initiation complex (PIC) is recruited by the selectivity factor 1 (SL1/TIF-IB) complex bound to the core promoter that precedes an rDNA repeat unit. The PIC assembly bends the promoter favoring the formation of the transcription bubble and promoter escape. Once the polymerase has escaped from the promoter it enters the elongation phase during which RNA is actively polymerized, based on complementarity with the template DNA strand. Highly processive, assembles in structures referred to as 'Miller trees' where many elongating Pol I complexes queue and transcribe the same rDNA coding regions. At terminator sequences downstream of the rDNA gene, PTRF interacts with Pol I and halts Pol I transcription leading to the release of the RNA transcript and polymerase from the DNA. Forms Pol I active center together with the second largest subunit POLR1B/RPA2. Appends one nucleotide at a time to the 3' end of the nascent RNA, with POLR1A/RPA1 contributing a Mg(2+)-coordinating DxDGD motif, and POLR1B/RPA2 participating in the coordination of a second Mg(2+) ion and providing lysine residues believed to facilitate Watson-Crick base pairing between the incoming nucleotide and the template base. Typically, Mg(2+) ions direct a 5' nucleoside triphosphate to form a phosphodiester bond with the 3' hydroxyl of the preceding nucleotide of the nascent RNA, with the elimination of pyrophosphate. Has proofreading activity: Pauses and backtracks to allow the cleavage of a missincorporated nucleotide via POLR1H/RPA12. High Pol I processivity is associated with decreased transcription fidelity. The polypeptide is DNA-directed RNA polymerase I subunit RPA1 (Mus musculus (Mouse)).